Here is a 72-residue protein sequence, read N- to C-terminus: Large ribosomal subunit protein bL31c (72 aa).

This sequence belongs to the bacterial ribosomal protein bL31 family. Type A subfamily. Part of the 50S ribosomal subunit.

It is found in the plastid. The protein resides in the chloroplast. Its function is as follows. Binds the 23S rRNA. This Phaeodactylum tricornutum (strain CCAP 1055/1) protein is Large ribosomal subunit protein bL31c (rpl31).